A 110-amino-acid polypeptide reads, in one-letter code: Large ribosomal subunit protein uL22 (110 aa).

It belongs to the universal ribosomal protein uL22 family. In terms of assembly, part of the 50S ribosomal subunit.

This protein binds specifically to 23S rRNA; its binding is stimulated by other ribosomal proteins, e.g. L4, L17, and L20. It is important during the early stages of 50S assembly. It makes multiple contacts with different domains of the 23S rRNA in the assembled 50S subunit and ribosome. Functionally, the globular domain of the protein is located near the polypeptide exit tunnel on the outside of the subunit, while an extended beta-hairpin is found that lines the wall of the exit tunnel in the center of the 70S ribosome. This chain is Large ribosomal subunit protein uL22, found in Haemophilus influenzae (strain 86-028NP).